Here is a 281-residue protein sequence, read N- to C-terminus: Ribosomal RNA small subunit methyltransferase A (281 aa).

The S-adenosyl-L-methionine site is built by Asn21, Leu23, Gly48, Glu69, Asp92, and Asn113.

Belongs to the class I-like SAM-binding methyltransferase superfamily. rRNA adenine N(6)-methyltransferase family. RsmA subfamily.

It is found in the cytoplasm. It carries out the reaction adenosine(1518)/adenosine(1519) in 16S rRNA + 4 S-adenosyl-L-methionine = N(6)-dimethyladenosine(1518)/N(6)-dimethyladenosine(1519) in 16S rRNA + 4 S-adenosyl-L-homocysteine + 4 H(+). Its function is as follows. Specifically dimethylates two adjacent adenosines (A1518 and A1519) in the loop of a conserved hairpin near the 3'-end of 16S rRNA in the 30S particle. May play a critical role in biogenesis of 30S subunits. This Ralstonia nicotianae (strain ATCC BAA-1114 / GMI1000) (Ralstonia solanacearum) protein is Ribosomal RNA small subunit methyltransferase A.